The following is a 440-amino-acid chain: Actin-like protein 7A (440 aa).

The segment at methionine 1–glutamine 29 is disordered. Residues alanine 36 to threonine 56 form a required for interaction with TES region.

It belongs to the actin family. As to quaternary structure, interacts (via N-terminus) with TES (via LIM domain 2). Heterodimer with TES; the heterodimer interacts with ENAH to form a heterotrimer. Interacts with ACTL9. Interacts with CYLC1; the interaction may be relevant for proper acrosome attachment to the nuclear envelope. In terms of tissue distribution, detected in testis. Detected at the acrosome of round spermatids (at protein level). Detected in adult and embryonic testis. Detected in developing male germ cells.

The protein localises to the cytoplasm. It is found in the cytoskeleton. The protein resides in the golgi apparatus. Its subcellular location is the nucleus. It localises to the cytoplasmic vesicle. The protein localises to the secretory vesicle. It is found in the acrosome. Its function is as follows. Essential for normal spermatogenesis and male fertility. Required for normal sperm head morphology, acroplaxome formation, acrosome attachment, and acrosome granule stability. May anchor and stabilize acrosomal adherence to the acroplaxome at least in part by facilitating the presence of F-actin in the subacrosomal space. May play an important role in formation and fusion of Golgi-derived vesicles during acrosome biogenesis. This chain is Actin-like protein 7A (Actl7a), found in Mus musculus (Mouse).